The sequence spans 116 residues: Cation channel sperm-associated auxiliary subunit TMEM262 (116 aa).

The Cytoplasmic segment spans residues 1–16; it reads MRWRDRIAVLCFPPGL. Residues 17-38 form a helical membrane-spanning segment; the sequence is MLTVAALILFFIHMGVFASDVH. At 39–51 the chain is on the extracellular side; the sequence is NFCVIHNYDHMSF. A helical membrane pass occupies residues 52–72; the sequence is RYTVVLIFSQVISIGWAAMGS. Over 73–84 the chain is Cytoplasmic; the sequence is LYAEMTGDKFLR. The helical transmembrane segment at 85–107 threads the bilayer; sequence CFALTILILNGAMFFNRLCLEFL. The Extracellular portion of the chain corresponds to 108-116; it reads AINYREERH.

In terms of assembly, component of the CatSper complex or CatSpermasome composed of the core pore-forming members CATSPER1, CATSPER2, CATSPER3 and CATSPER4 as well as auxiliary members CATSPERB, CATSPERG, CATSPERD, CATSPERE, CATSPERZ, C2CD6/CATSPERT, SLCO6C1, TMEM249, TMEM262 and EFCAB9. HSPA1 may be an additional auxiliary complex member. The core complex members CATSPER1, CATSPER2, CATSPER3 and CATSPER4 form a heterotetrameric channel. The auxiliary CATSPERB, CATSPERG2, CATSPERD and CATSPERE subunits form a pavilion-like structure over the pore which stabilizes the complex through interactions with CATSPER4, CATSPER3, CATSPER1 and CATSPER2 respectively. SLCO6C1 interacts with CATSPERE and TMEM262/CATSPERH interacts with CATSPERB, further stabilizing the complex. C2CD6/CATSPERT interacts at least with CATSPERD and is required for targeting the CatSper complex in the flagellar membrane.

The protein resides in the cell projection. It is found in the cilium. It localises to the flagellum membrane. Functionally, auxiliary component of the CatSper complex, a complex involved in sperm cell hyperactivation. In Mus musculus (Mouse), this protein is Cation channel sperm-associated auxiliary subunit TMEM262.